A 206-amino-acid chain; its full sequence is Ras-related protein Ral-A (206 aa).

Residues 24 to 29 (GVGKSA), 40 to 46 (VEDYEPT), and 127 to 130 (NKSD) each bind GTP. The short motif at 43–51 (YEPTKADSY) is the Effector region element. The (Microbial infection) O-linked (Glc) threonine; by P.sordellii toxin TcsL glycan is linked to Thr46. Ser194 bears the Phosphoserine; by AURKA mark. A Cysteine methyl ester modification is found at Cys203. Cys203 is lipidated: S-geranylgeranyl cysteine. Residues 204-206 (CIL) constitute a propeptide, removed in mature form.

It belongs to the small GTPase superfamily. Ras family. In terms of assembly, interacts (via effector domain) with RALBP1; during mitosis, recruits RALBP1 to the mitochondrion where it promotes DNM1L phosphorylation and mitochondrial fission. Interacts with EXOC2/Sec5 and EXOC8/Exo84; binding to EXOC2 and EXOC8 is mutually exclusive. Interacts with Clostridium exoenzyme C3. Interacts with RALGPS1. Interacts with LPAR1 and LPAR2. Interacts with GRK2 in response to LPAR1 activation. RALA and GRK2 binding to LPAR1 is mutually exclusive. Interacts with CDC42. Phosphorylated. Phosphorylation at Ser-194 by AURKA/Aurora kinase A, during mitosis, induces RALA localization to the mitochondrion where it regulates mitochondrial fission. In terms of processing, prenylation is essential for membrane localization. The geranylgeranylated form and the farnesylated mutant do not undergo alternative prenylation in response to geranylgeranyltransferase I inhibitors (GGTIs) and farnesyltransferase I inhibitors (FTIs). Post-translationally, (Microbial infection) Glucosylated at Thr-46 by P.sordellii toxin TcsL from strain 6018. Monoglucosylation completely prevents the recognition of the downstream effector, blocking the GTPases in their inactive form. Not glucosylated by TcsL from strain VPI 9048.

It localises to the cell membrane. The protein localises to the cleavage furrow. It is found in the midbody. The protein resides in the midbody ring. Its subcellular location is the mitochondrion. It carries out the reaction GTP + H2O = GDP + phosphate + H(+). Alternates between an inactive form bound to GDP and an active form bound to GTP. Activated by a guanine nucleotide-exchange factor (GEF) and inactivated by a GTPase-activating protein (GAP). In terms of biological role, multifunctional GTPase involved in a variety of cellular processes including gene expression, cell migration, cell proliferation, oncogenic transformation and membrane trafficking. Accomplishes its multiple functions by interacting with distinct downstream effectors. Acts as a GTP sensor for GTP-dependent exocytosis of dense core vesicles. The RALA-exocyst complex regulates integrin-dependent membrane raft exocytosis and growth signaling. Key regulator of LPAR1 signaling and competes with GRK2 for binding to LPAR1 thus affecting the signaling properties of the receptor. Required for anchorage-independent proliferation of transformed cells. During mitosis, supports the stabilization and elongation of the intracellular bridge between dividing cells. Cooperates with EXOC2 to recruit other components of the exocyst to the early midbody. During mitosis, also controls mitochondrial fission by recruiting to the mitochondrion RALBP1, which mediates the phosphorylation and activation of DNM1L by the mitotic kinase cyclin B-CDK1. In Homo sapiens (Human), this protein is Ras-related protein Ral-A (RALA).